The primary structure comprises 223 residues: Oxaloacetate tautomerase FAHD1, mitochondrial (223 aa).

The N-terminal 30 residues, 1–30, are a transit peptide targeting the mitochondrion; it reads MATSMIQRMFKQGTKIVCVGRNYAAHAKEL. Residues Glu-67, Glu-69, and Asp-98 each coordinate Mg(2+).

Belongs to the FAH family. The cofactor is Mg(2+). Requires Mn(2+) as cofactor.

The protein localises to the mitochondrion. It carries out the reaction oxaloacetate = enol-oxaloacetate. Functionally, tautomerase that converts enol-oxaloacetate, a strong inhibitor of succinate dehydrogenase, to the physiological keto form of oxaloacetate. This chain is Oxaloacetate tautomerase FAHD1, mitochondrial, found in Arabidopsis thaliana (Mouse-ear cress).